The chain runs to 105 residues: Small ribosomal subunit protein uS10 (105 aa).

Belongs to the universal ribosomal protein uS10 family. Part of the 30S ribosomal subunit.

In terms of biological role, involved in the binding of tRNA to the ribosomes. The sequence is that of Small ribosomal subunit protein uS10 from Nostoc punctiforme (strain ATCC 29133 / PCC 73102).